The sequence spans 464 residues: GDNF family receptor alpha-2 (464 aa).

A signal peptide spans 1-21; it reads MILANVFCLFFFLDETLRSLA. Disulfide bonds link Cys-40–Cys-93, Cys-95–Cys-105, Cys-161–Cys-222, Cys-168–Cys-174, Cys-185–Cys-200, Cys-195–Cys-241, Cys-224–Cys-229, Cys-251–Cys-323, Cys-258–Cys-264, Cys-275–Cys-293, and Cys-285–Cys-347. Residue Asn-52 is glycosylated (N-linked (GlcNAc...) asparagine). Asn-357 is a glycosylation site (N-linked (GlcNAc...) asparagine). Residues 363-392 are disordered; the sequence is VSPKGPSFQATQAPRVEKTPSLPDDLSDST. Residues 381–392 are compositionally biased toward low complexity; it reads TPSLPDDLSDST. N-linked (GlcNAc...) asparagine glycosylation is present at Asn-413. Ser-444 carries the GPI-anchor amidated serine lipid modification. Positions 445 to 464 are cleaved as a propeptide — removed in mature form; that stretch reads RARPSAALTVLSVLMLKLAL.

The protein belongs to the GDNFR family. Interacts with NRTN ligand and RET: forms a 2:2:2 ternary complex composed of NRTN ligand, GFRA2 and RET receptor. Also forms a 4:4:4 tetrameric complex composed of 4 copies of NRTN ligand, GFRA2 and RET receptor, which prevents endocytosis of RET. Interacts with SORL1. As to expression, found in both brain and placenta.

It localises to the cell membrane. In terms of biological role, receptor for neurturin (NRTN), a growth factor that supports the survival of sympathetic neurons. NRTN-binding leads to autophosphorylation and activation of the RET receptor. Also able to mediate GDNF signaling through the RET tyrosine kinase receptor. Its function is as follows. Participates in NRTN-induced 'Ser-727' phosphorylation of STAT3. The sequence is that of GDNF family receptor alpha-2 (GFRA2) from Homo sapiens (Human).